The following is a 274-amino-acid chain: Diaminopimelate epimerase (274 aa).

Substrate is bound by residues N11, Q44, and N64. Residue C73 is the Proton donor of the active site. Residues G74–N75, N157, N190, and E208–R209 contribute to the substrate site. C217 functions as the Proton acceptor in the catalytic mechanism. Substrate is bound at residue G218 to S219.

It belongs to the diaminopimelate epimerase family. As to quaternary structure, homodimer.

The protein localises to the cytoplasm. The catalysed reaction is (2S,6S)-2,6-diaminopimelate = meso-2,6-diaminopimelate. It participates in amino-acid biosynthesis; L-lysine biosynthesis via DAP pathway; DL-2,6-diaminopimelate from LL-2,6-diaminopimelate: step 1/1. In terms of biological role, catalyzes the stereoinversion of LL-2,6-diaminopimelate (L,L-DAP) to meso-diaminopimelate (meso-DAP), a precursor of L-lysine and an essential component of the bacterial peptidoglycan. The sequence is that of Diaminopimelate epimerase from Pasteurella multocida (strain Pm70).